The following is a 147-amino-acid chain: Leghemoglobin 8 (147 aa).

In terms of domain architecture, Globin spans 2–147; the sequence is GFTEKQESLV…LAASIKKSMS (146 aa). Residues Tyr25 and Tyr30 each carry the nitrated tyrosine modification. Position 45 (Ser45) interacts with heme b. At Ser45 the chain carries Phosphoserine. His62 serves as a coordination point for O2. Residues Lys65, His94, and Lys97 each coordinate heme b. Tyr135 is subject to Nitrated tyrosine.

This sequence belongs to the plant globin family. In terms of assembly, monomer. Interacts with CAS31 in the cytoplasm; this interaction leads to its protection from denaturation under thermal and drought stresses. Nitrated in effective nodules and particularly in hypoxic conditions; this mechanism may play a protective role in the symbiosis by buffering toxic peroxynitrite NO(2)(-). Nitration level decrease during nodule senescence. Post-translationally, phosphorylation at Ser-45 disrupts the molecular environment of its porphyrin ring oxygen binding pocket, thus leading to a reduced oxygen consumption and to the delivery of oxygen O(2) to symbiosomes. Root nodules.

It localises to the cytoplasm. The protein resides in the nucleus. Its function is as follows. Leghemoglobin that reversibly binds oxygen O(2) through a pentacoordinated heme iron. In root nodules, facilitates the diffusion of oxygen to the bacteroids while preventing the bacterial nitrogenase from being inactivated by buffering dioxygen, nitric oxide and carbon monoxide, and promoting the formation of reactive oxygen species (ROS, e.g. H(2)O(2)). This role is essential for symbiotic nitrogen fixation (SNF). The sequence is that of Leghemoglobin 8 from Medicago truncatula (Barrel medic).